A 104-amino-acid polypeptide reads, in one-letter code: Pyrimidine/purine nucleoside phosphorylase (104 aa).

It belongs to the nucleoside phosphorylase PpnP family.

It carries out the reaction a purine D-ribonucleoside + phosphate = a purine nucleobase + alpha-D-ribose 1-phosphate. The catalysed reaction is adenosine + phosphate = alpha-D-ribose 1-phosphate + adenine. The enzyme catalyses cytidine + phosphate = cytosine + alpha-D-ribose 1-phosphate. It catalyses the reaction guanosine + phosphate = alpha-D-ribose 1-phosphate + guanine. It carries out the reaction inosine + phosphate = alpha-D-ribose 1-phosphate + hypoxanthine. The catalysed reaction is thymidine + phosphate = 2-deoxy-alpha-D-ribose 1-phosphate + thymine. The enzyme catalyses uridine + phosphate = alpha-D-ribose 1-phosphate + uracil. It catalyses the reaction xanthosine + phosphate = alpha-D-ribose 1-phosphate + xanthine. Functionally, catalyzes the phosphorolysis of diverse nucleosides, yielding D-ribose 1-phosphate and the respective free bases. Can use uridine, adenosine, guanosine, cytidine, thymidine, inosine and xanthosine as substrates. Also catalyzes the reverse reactions. This is Pyrimidine/purine nucleoside phosphorylase from Herminiimonas arsenicoxydans.